Consider the following 358-residue polypeptide: UDP-N-acetylglucosamine--N-acetylmuramyl-(pentapeptide) pyrophosphoryl-undecaprenol N-acetylglucosamine transferase (358 aa).

UDP-N-acetyl-alpha-D-glucosamine-binding positions include 11–13, Asn120, Arg161, Ser188, and Gln282; that span reads TGG.

Belongs to the glycosyltransferase 28 family. MurG subfamily.

The protein resides in the cell inner membrane. The enzyme catalyses di-trans,octa-cis-undecaprenyl diphospho-N-acetyl-alpha-D-muramoyl-L-alanyl-D-glutamyl-meso-2,6-diaminopimeloyl-D-alanyl-D-alanine + UDP-N-acetyl-alpha-D-glucosamine = di-trans,octa-cis-undecaprenyl diphospho-[N-acetyl-alpha-D-glucosaminyl-(1-&gt;4)]-N-acetyl-alpha-D-muramoyl-L-alanyl-D-glutamyl-meso-2,6-diaminopimeloyl-D-alanyl-D-alanine + UDP + H(+). It functions in the pathway cell wall biogenesis; peptidoglycan biosynthesis. Its function is as follows. Cell wall formation. Catalyzes the transfer of a GlcNAc subunit on undecaprenyl-pyrophosphoryl-MurNAc-pentapeptide (lipid intermediate I) to form undecaprenyl-pyrophosphoryl-MurNAc-(pentapeptide)GlcNAc (lipid intermediate II). In Synechococcus sp. (strain WH7803), this protein is UDP-N-acetylglucosamine--N-acetylmuramyl-(pentapeptide) pyrophosphoryl-undecaprenol N-acetylglucosamine transferase.